Consider the following 156-residue polypeptide: Small ribosomal subunit protein uS7 (156 aa).

It belongs to the universal ribosomal protein uS7 family. Part of the 30S ribosomal subunit. Contacts proteins S9 and S11.

Its function is as follows. One of the primary rRNA binding proteins, it binds directly to 16S rRNA where it nucleates assembly of the head domain of the 30S subunit. Is located at the subunit interface close to the decoding center, probably blocks exit of the E-site tRNA. The chain is Small ribosomal subunit protein uS7 from Syntrophomonas wolfei subsp. wolfei (strain DSM 2245B / Goettingen).